The sequence spans 145 residues: 3-hydroxyacyl-[acyl-carrier-protein] dehydratase FabZ (145 aa).

The active site involves His-47.

It belongs to the thioester dehydratase family. FabZ subfamily.

Its subcellular location is the cytoplasm. It catalyses the reaction a (3R)-hydroxyacyl-[ACP] = a (2E)-enoyl-[ACP] + H2O. Involved in unsaturated fatty acids biosynthesis. Catalyzes the dehydration of short chain beta-hydroxyacyl-ACPs and long chain saturated and unsaturated beta-hydroxyacyl-ACPs. This chain is 3-hydroxyacyl-[acyl-carrier-protein] dehydratase FabZ, found in Ruthia magnifica subsp. Calyptogena magnifica.